Reading from the N-terminus, the 119-residue chain is MPRVKGGTVTRRRRKKILKLAKGYFGSKHRLYKVANQQVMKSLMYAYRDRRQRKRDFRKLWITRINAAARMNGLSYSRLMHGLKLAGIEVNRKMLADLAVNDAAAFTQLANIAKENLNK.

The protein belongs to the bacterial ribosomal protein bL20 family.

Functionally, binds directly to 23S ribosomal RNA and is necessary for the in vitro assembly process of the 50S ribosomal subunit. It is not involved in the protein synthesizing functions of that subunit. The chain is Large ribosomal subunit protein bL20 from Anoxybacillus flavithermus (strain DSM 21510 / WK1).